Reading from the N-terminus, the 232-residue chain is Octanoyltransferase (232 aa).

The 176-residue stretch at 44 to 219 (EHTGDELWVV…QLARQFGLVL (176 aa)) folds into the BPL/LPL catalytic domain. Substrate contacts are provided by residues 83–90 (RGGQVTYH), 150–152 (ALG), and 163–165 (GLS). The active-site Acyl-thioester intermediate is C181.

This sequence belongs to the LipB family.

It is found in the cytoplasm. It carries out the reaction octanoyl-[ACP] + L-lysyl-[protein] = N(6)-octanoyl-L-lysyl-[protein] + holo-[ACP] + H(+). Its pathway is protein modification; protein lipoylation via endogenous pathway; protein N(6)-(lipoyl)lysine from octanoyl-[acyl-carrier-protein]: step 1/2. Catalyzes the transfer of endogenously produced octanoic acid from octanoyl-acyl-carrier-protein onto the lipoyl domains of lipoate-dependent enzymes. Lipoyl-ACP can also act as a substrate although octanoyl-ACP is likely to be the physiological substrate. This chain is Octanoyltransferase, found in Xanthomonas campestris pv. campestris (strain 8004).